The following is a 91-amino-acid chain: Putative septation protein SpoVG (91 aa).

Belongs to the SpoVG family.

Functionally, could be involved in septation. The sequence is that of Putative septation protein SpoVG from Clostridium botulinum (strain Alaska E43 / Type E3).